We begin with the raw amino-acid sequence, 98 residues long: Large ribosomal subunit protein eL21 (98 aa).

Residues Met1–Lys17 are compositionally biased toward basic residues. Positions Met1–Thr28 are disordered.

This sequence belongs to the eukaryotic ribosomal protein eL21 family.

The chain is Large ribosomal subunit protein eL21 from Methanobrevibacter smithii (strain ATCC 35061 / DSM 861 / OCM 144 / PS).